Consider the following 829-residue polypeptide: Pre-mRNA-splicing factor syf1 (829 aa).

HAT repeat units lie at residues 15-47 (SLVSEEDFPYEQDIVRNPGSTKPWLAYIEYKLQ), 49-81 (GTVQEQAYIMERACVQLPRSYKLWKMYLRFRTK), 93-125 (SEYQKVNSLFERALILLNKMPRIWEMYLKFLMQ), 127-161 (PLVTHTRRTFDRALRALPITQHNRIWALYRPFANS), 163-182 (EGETAVKIWRRYMQVHPEDA), 277-312 (GSFERARDVFEEGITTVMTVRDFTLVFDSYTEFEES), 380-418 (DNKEEVVKTYLDAIEAIQPKKAVGALHQLWTNYAKFYEA), 420-456 (GDLSSARRIMEKAVKVPYKSVAELADMWIEWAEMELR), 473-505 (APKRSTVDYFDETLSPQQRVHKSWKLWSFYVDL), 544-578 (KYFEESFKIYERGLDLFSYPVAFELWNLYLTKAVD), 581-615 (ISIERLRDLFEQAVEDCPPKFAKVIYLMYGNLEEE), and 689-723 (GEIDRARAIYGHASQFCDPRTNPGFWTKWDQFEVQ). Residues 799-829 (AASEGPKGGSMPVQPVEVHNPDAIDLDEMDE) are disordered.

This sequence belongs to the crooked-neck family. As to quaternary structure, associated with the spliceosome.

It is found in the nucleus. Its function is as follows. Involved in pre-mRNA splicing and cell cycle progression. This Neurospora crassa (strain ATCC 24698 / 74-OR23-1A / CBS 708.71 / DSM 1257 / FGSC 987) protein is Pre-mRNA-splicing factor syf1 (msp-41).